We begin with the raw amino-acid sequence, 492 residues long: Catalase-2 (492 aa).

Residues His65 and Asn138 contribute to the active site. Heme is bound at residue Tyr348.

This sequence belongs to the catalase family. In terms of assembly, homotetramer and heterotetramer. At least six or seven isozymes are produced from a mixture of 3 gene products. Interacts with NCA1. Interacts with LSD1. Heme is required as a cofactor.

It localises to the cytoplasm. It is found in the cytosol. The protein resides in the peroxisome matrix. The enzyme catalyses 2 H2O2 = O2 + 2 H2O. In terms of biological role, catalyzes the degradation of hydrogen peroxide (H(2)O(2)) generated by peroxisomal oxidases to water and oxygen, thereby protecting cells from the toxic effects of hydrogen peroxide. The chain is Catalase-2 (CAT2) from Arabidopsis thaliana (Mouse-ear cress).